Consider the following 409-residue polypeptide: Argininosuccinate synthase (409 aa).

ATP contacts are provided by residues A12 to S20 and A39. L-citrulline-binding residues include Y90 and S95. G120 lines the ATP pocket. Residues T122, N126, and D127 each coordinate L-aspartate. N126 is an L-citrulline binding site. Residues R130, S181, S190, E266, and Y278 each contribute to the L-citrulline site.

The protein belongs to the argininosuccinate synthase family. Type 1 subfamily. In terms of assembly, homotetramer.

Its subcellular location is the cytoplasm. It catalyses the reaction L-citrulline + L-aspartate + ATP = 2-(N(omega)-L-arginino)succinate + AMP + diphosphate + H(+). The protein operates within amino-acid biosynthesis; L-arginine biosynthesis; L-arginine from L-ornithine and carbamoyl phosphate: step 2/3. The protein is Argininosuccinate synthase of Acidiphilium cryptum (strain JF-5).